The sequence spans 358 residues: MPQNVLLPGPAPWGFRLTGGIDFNQPLVISRITPGSKSSVANLCPGDVILAIDGFSTETMTHAEAQDRIKAATDQLCLKIDRAETRIWSPQVCEDGKAQPFKINLEAEPQDLGFFEHKHNIRPKPFILPGRSSGSSTPSGFDPGSGRSTPSSVSTIDPVELKAASRIAPNVPLEMELPGVKIVHAQFNTPMQLYSDDNIMESLQGQVSTILGEKTPMSDPVPPSVPQSDVYKLLHDDTEHPSKPRQSGSFKILQDMVDDDPDRPSGTRSVRAPVTKPNTGAAAVQKVPICDRCGNGIVGTVVKAKDKLRHPDCFVCSDCNLNLKQKGYFFVEGQLYCEAHARARMRPPEGYDAVTVYH.

The region spanning 1–84 (MPQNVLLPGP…QLCLKIDRAE (84 aa)) is the PDZ domain. Disordered regions lie at residues 126–155 (FILPGRSSGSSTPSGFDPGSGRSTPSSVST) and 237–274 (DTEHPSKPRQSGSFKILQDMVDDDPDRPSGTRSVRAPV). Over residues 129-146 (PGRSSGSSTPSGFDPGSG) the composition is skewed to low complexity. The region spanning 288 to 347 (PICDRCGNGIVGTVVKAKDKLRHPDCFVCSDCNLNLKQKGYFFVEGQLYCEAHARARMRP) is the LIM zinc-binding domain.

It is found in the cytoplasm. It localises to the myofibril. The protein resides in the sarcomere. The protein localises to the z line. Its function is as follows. May play a role in the organization of actin filament arrays within muscle cells. This Xenopus laevis (African clawed frog) protein is PDZ and LIM domain protein 3 (pdlim3).